A 223-amino-acid chain; its full sequence is Adenylate kinase 4, mitochondrial (223 aa).

An a ribonucleoside 5'-triphosphate-binding site is contributed by 15-20; that stretch reads GSGKGT. The NMP stretch occupies residues 35 to 64; sequence SSGHFLRENIKANTEVGEMAKQYIEKSLLV. Positions 36 and 41 each coordinate AMP. Position 60 is an N6-succinyllysine (K60). Residues 62–64, 89–92, and Q96 each bind AMP; these read LLV and GFPR. Residues 125 to 162 are LID; it reads RRWIHPPSGRVYNLDFNPPHVHGIDDVTGEPLVQQEDD. Residues R126 and 135-136 each bind a ribonucleoside 5'-triphosphate; that span reads VY. R170 provides a ligand contact to AMP. N6-acetyllysine is present on K175. Residues K179 and K186 each carry the N6-acetyllysine; alternate modification. N6-succinyllysine; alternate is present on residues K179 and K186. T199 provides a ligand contact to a ribonucleoside 5'-triphosphate.

This sequence belongs to the adenylate kinase family. AK3 subfamily. In terms of assembly, monomer. Interacts with SLC25A5/ANT2.

The protein resides in the mitochondrion matrix. The enzyme catalyses a ribonucleoside 5'-phosphate + ATP = a ribonucleoside 5'-diphosphate + ADP. It carries out the reaction AMP + ATP = 2 ADP. The catalysed reaction is GTP + AMP = GDP + ADP. It catalyses the reaction CMP + ATP = CDP + ADP. The enzyme catalyses GTP + CMP = CDP + GDP. It carries out the reaction dAMP + ATP = dADP + ADP. The catalysed reaction is dCMP + ATP = dCDP + ADP. It catalyses the reaction a 2'-deoxyribonucleoside 5'-diphosphate + ATP = a 2'-deoxyribonucleoside 5'-triphosphate + ADP. The enzyme catalyses a ribonucleoside 5'-diphosphate + ATP = a ribonucleoside 5'-triphosphate + ADP. It carries out the reaction GDP + ATP = GTP + ADP. The catalysed reaction is CDP + GTP = CTP + GDP. It catalyses the reaction CDP + ATP = CTP + ADP. The enzyme catalyses UDP + ATP = UTP + ADP. It carries out the reaction GTP + UDP = UTP + GDP. The catalysed reaction is dADP + GTP = dATP + GDP. It catalyses the reaction dCDP + GTP = dCTP + GDP. The enzyme catalyses dCDP + ATP = dCTP + ADP. It carries out the reaction dGDP + ATP = dGTP + ADP. The catalysed reaction is dTDP + GTP = dTTP + GDP. It catalyses the reaction dTDP + ATP = dTTP + ADP. Broad-specificity mitochondrial nucleoside phosphate kinase involved in cellular nucleotide homeostasis by catalyzing nucleoside-phosphate interconversions. Similar to other adenylate kinases, preferentially catalyzes the phosphorylation of the nucleoside monophosphate AMP with ATP as phosphate donor to produce ADP. Phosphorylates only AMP when using GTP as phosphate donor. In vitro, can also catalyze the phosphorylation of CMP, dAMP and dCMP and use GTP as an alternate phosphate donor. Moreover, exhibits a diphosphate kinase activity, producing ATP, CTP, GTP, UTP, TTP, dATP, dCTP and dGTP from the corresponding diphosphate substrates with either ATP or GTP as phosphate donors. Plays a role in controlling cellular ATP levels by regulating phosphorylation and activation of the energy sensor protein kinase AMPK. Plays a protective role in the cellular response to oxidative stress. This chain is Adenylate kinase 4, mitochondrial, found in Pongo abelii (Sumatran orangutan).